Reading from the N-terminus, the 231-residue chain is Large ribosomal subunit protein uL1 (231 aa).

Belongs to the universal ribosomal protein uL1 family. In terms of assembly, part of the 50S ribosomal subunit.

Functionally, binds directly to 23S rRNA. The L1 stalk is quite mobile in the ribosome, and is involved in E site tRNA release. Its function is as follows. Protein L1 is also a translational repressor protein, it controls the translation of the L11 operon by binding to its mRNA. The protein is Large ribosomal subunit protein uL1 of Shouchella clausii (strain KSM-K16) (Alkalihalobacillus clausii).